We begin with the raw amino-acid sequence, 354 residues long: Guanine nucleotide-binding protein G(o) subunit alpha (354 aa).

The N-myristoyl glycine moiety is linked to residue glycine 2. A lipid anchor (S-palmitoyl cysteine) is attached at cysteine 3. Residues 32 to 354 (KDIKLLLLGA…ANNLRGCGLY (323 aa)) enclose the G-alpha domain. A G1 motif region spans residues 35-48 (KLLLLGAGESGKST). GTP-binding positions include 40 to 47 (GAGESGKS), 176 to 182 (LRTRVKT), 201 to 205 (DVGGQ), 270 to 273 (NKKD), and alanine 326. 2 residues coordinate Mg(2+): serine 47 and threonine 182. The G2 motif stretch occupies residues 174-182 (DILRTRVKT). The segment at 197-206 (FKLFDVGGQR) is G3 motif. A G4 motif region spans residues 266 to 273 (ILFLNKKD). The interval 324–329 (TCATDT) is G5 motif.

The protein belongs to the G-alpha family. G(i/o/t/z) subfamily. G proteins are composed of 3 units; alpha, beta and gamma. The alpha chain contains the guanine nucleotide binding site.

Guanine nucleotide-binding proteins (G proteins) are involved as modulators or transducers in various transmembrane signaling systems. The G(o) protein function is not clear. The protein is Guanine nucleotide-binding protein G(o) subunit alpha of Lymnaea stagnalis (Great pond snail).